Here is a 278-residue protein sequence, read N- to C-terminus: ATPase SWSAP1 (278 aa).

Residues 237–278 are disordered; it reads SPEKKDSSAGSQSLTLGCDNLPGPGSPLDGILTSETGADSKT. Polar residues predominate over residues 269–278; the sequence is TSETGADSKT.

Interacts with ZSWIM7; they form a functional complex involved in homologous recombination repair and stabilize each other. Interacts with RAD51, RAD51B, RAD51C, RAD51D and XRCC3; involved in homologous recombination repair.

The protein resides in the nucleus. In terms of biological role, ATPase which is preferentially stimulated by single-stranded DNA and is involved in homologous recombination repair (HRR). Has a DNA-binding activity which is independent of its ATPase activity. The sequence is that of ATPase SWSAP1 (Swsap1) from Mus musculus (Mouse).